The chain runs to 404 residues: MKRTVIMMLDSFGVGAAGDAAKFGDVGSDTFGHIAKACAEGKADTGRKGPLALPNLARLGLAHAAMESTGAFAPGFADNVDLIGAYGHAQELSSGKDTPSGHWEMAGVPVLFEWGYFSEHQNSFPKELTDKILARAGLDGFLGNCHASGTTILEELGEEHMRSGKPIFYTSADSVFQIACHEGTFGLENLYRLCEIAREELEPYNIGRVIARPFDGTGPSDFARTGNRKDYSLEPPAKTVLDKLKAAGGEVVSVGKIADIYAYCGITKKVKANGLEALFDATLAEVKSAGENTIVFTNFVDFDSHYGHRRDVAGYAKGLEYFDARLPEMLALLDEDDLLILTADHGCDPTWQGTDHTREYVPVLAYGAGLKAGSLGRRNSFADIGQSIASYFKLEPMEYGESFI.

Residues Asp-10, Asp-303, His-308, Asp-344, His-345, and His-356 each contribute to the Mn(2+) site.

The protein belongs to the phosphopentomutase family. The cofactor is Mn(2+).

It is found in the cytoplasm. It catalyses the reaction 2-deoxy-alpha-D-ribose 1-phosphate = 2-deoxy-D-ribose 5-phosphate. The catalysed reaction is alpha-D-ribose 1-phosphate = D-ribose 5-phosphate. It participates in carbohydrate degradation; 2-deoxy-D-ribose 1-phosphate degradation; D-glyceraldehyde 3-phosphate and acetaldehyde from 2-deoxy-alpha-D-ribose 1-phosphate: step 1/2. Isomerase that catalyzes the conversion of deoxy-ribose 1-phosphate (dRib-1-P) and ribose 1-phosphate (Rib-1-P) to deoxy-ribose 5-phosphate (dRib-5-P) and ribose 5-phosphate (Rib-5-P), respectively. The polypeptide is Phosphopentomutase (Shewanella oneidensis (strain ATCC 700550 / JCM 31522 / CIP 106686 / LMG 19005 / NCIMB 14063 / MR-1)).